A 1325-amino-acid polypeptide reads, in one-letter code: Bile salt export pump (1325 aa).

Residues 1 to 62 (MSDAVILRSV…FSSTTDIWLM (62 aa)) lie on the Cytoplasmic side of the membrane. The ABC transmembrane type-1 1 domain maps to 62 to 385 (MFVGSLCAFL…ASSCLEAFAT (324 aa)). The helical transmembrane segment at 63-83 (FVGSLCAFLHGLSHPGVLLIF) threads the bilayer. At 84-147 (GTMTDVFIAY…MIKFASYYAG (64 aa)) the chain is on the extracellular side. Asn-109, Asn-116, Asn-122, and Asn-125 each carry an N-linked (GlcNAc...) asparagine glycan. Residues 148-168 (IALLVLITGYIQICFWVIAAA) form a helical membrane-spanning segment. The Cytoplasmic portion of the chain corresponds to 169–240 (RQIQKMRKIS…FLLGFYQGWK (72 aa)). A helical membrane pass occupies residues 241–261 (LTLVIISVSPLIGIGAAIIGL). Residues 262-319 (SVSKFTDYELKAYAKAGSVADEVISSMRTVAAFGGEKKEVERYEKNLVFAQRWGIRKG) are Extracellular-facing. The helical transmembrane segment at 320-340 (IVMGFFTGFMWCLIFLCYALA) threads the bilayer. The Cytoplasmic portion of the chain corresponds to 341 to 353 (FWYGSKLVLEDGE). The chain crosses the membrane as a helical span at residues 354–374 (YTAGTLVQIFLSILLGALNLG). N-linked (GlcNAc...) asparagine glycans are attached at residues Asn-375, Asn-424, and Asn-440. Residues 375 to 759 (NASSCLEAFA…KFNAPEWPYM (385 aa)) are Extracellular-facing. The 237-residue stretch at 420-656 (IEFHNVTFHY…KGVYFTLVTL (237 aa)) folds into the ABC transporter 1 domain. 455 to 462 (GSSGSGKS) contacts ATP. Residue Asn-591 is glycosylated (N-linked (GlcNAc...) asparagine). The 289-residue stretch at 759 to 1047 (MLFGAVGAAV…ASSYTPSYAK (289 aa)) folds into the ABC transmembrane type-1 2 domain. A helical transmembrane segment spans residues 760–780 (LFGAVGAAVNGSVTPLYAFLF). Over 781–798 (SQILGTFSLPDKEEQRSQ) the chain is Cytoplasmic. The helical transmembrane segment at 799–819 (INGVCLLFVAVGCVSLCTQFL) threads the bilayer. The Extracellular portion of the chain corresponds to 820–894 (QGYAFAKSGE…NSFTNVTVAM (75 aa)). Asn-889 carries an N-linked (GlcNAc...) asparagine glycan. Residues 895 to 915 (IIAFFFSWKLSLVIMCFFPFL) form a helical membrane-spanning segment. At 916 to 983 (ALSGALQTRM…PFKTAFRKAN (68 aa)) the chain is on the cytoplasmic side. The helical transmembrane segment at 984–1004 (VYGFCFGFSQCIVFVANSASY) threads the bilayer. The Extracellular segment spans residues 1005 to 1014 (RYGGYLIPNE). A helical membrane pass occupies residues 1015-1035 (GLHFSYVFRVISSVVLSATAL). Over 1036 to 1325 (GRASSYTPSY…KLVTTGAPIS (290 aa)) the chain is Cytoplasmic. One can recognise an ABC transporter 2 domain in the interval 1082–1320 (VDFVDCKFTY…KGAYYKLVTT (239 aa)). Residue 1117–1124 (GSSGCGKS) participates in ATP binding.

The protein belongs to the ABC transporter superfamily. ABCB family. Multidrug resistance exporter (TC 3.A.1.201) subfamily. As to quaternary structure, interacts with HAX1. Interacts with the adapter protein complex 2 (AP-2) throught AP2A2 or AP2A1; this interaction regulates cell membrane expression of ABCB11 through its internalization in a clathrin-dependent manner and its subsequent degradation. N-glycosylated. Post-translationally, ubiquitinated; short-chain ubiquitination regulates cell-Surface expression of ABCB11. In terms of tissue distribution, liver.

Its subcellular location is the apical cell membrane. It is found in the recycling endosome membrane. The protein localises to the endosome. It localises to the cell membrane. The catalysed reaction is cholate(in) + ATP + H2O = cholate(out) + ADP + phosphate + H(+). It carries out the reaction taurocholate(in) + ATP + H2O = taurocholate(out) + ADP + phosphate + H(+). It catalyses the reaction glycocholate(in) + ATP + H2O = glycocholate(out) + ADP + phosphate + H(+). The enzyme catalyses glycochenodeoxycholate(in) + ATP + H2O = glycochenodeoxycholate(out) + ADP + phosphate + H(+). The catalysed reaction is taurochenodeoxycholate(in) + ATP + H2O = taurochenodeoxycholate(out) + ADP + phosphate + H(+). It carries out the reaction glycoursodeoxycholate(in) + ATP + H2O = glycoursodeoxycholate(out) + ADP + phosphate + H(+). It catalyses the reaction tauroursodeoxycholate(in) + ATP + H2O = tauroursodeoxycholate(out) + ADP + phosphate + H(+). The enzyme catalyses taurodeoxycholate(in) + ATP + H2O = taurodeoxycholate(out) + ADP + phosphate + H(+). The catalysed reaction is taurolithocholate 3-sulfate(in) + ATP + H2O = taurolithocholate 3-sulfate(out) + ADP + phosphate + H(+). It carries out the reaction pravastatin(in) + ATP + H2O = pravastatin(out) + ADP + phosphate + H(+). With respect to regulation, the uptake of taurocholate is inhibited by taurolithocholate sulfate with an IC(50) of 9 uM. Pravastatin competitively inhibits the transport of taurocholic acid. Cyclosporin A, glibenclamide, rifampicin and troglitazonestrongly competitively inhibit the transport activity of taurocholate. The canalicular transport activity of taurocholate is strongly dependent on canalicular membrane cholesterol content. The uptake of taurocholate is increased by short- and medium-chain fatty acids. Cholesterol increases transport capacity of taurocholate without affecting the affinity for the substrate. Catalyzes the transport of the major hydrophobic bile salts, such as taurine and glycine-conjugated cholic acid across the canalicular membrane of hepatocytes in an ATP-dependent manner, therefore participates in hepatic bile acid homeostasis and consequently to lipid homeostasis through regulation of biliary lipid secretion in a bile salts dependent manner. Transports taurine-conjugated bile salts more rapidly than glycine-conjugated bile salts. Also transports non-bile acid compounds, such as pravastatin and fexofenadine in an ATP-dependent manner and may be involved in their biliary excretion. The polypeptide is Bile salt export pump (Canis lupus familiaris (Dog)).